The primary structure comprises 113 residues: Putative insulin-like growth factor 2-associated protein (113 aa).

Expressed in fetal and adult liver.

The polypeptide is Putative insulin-like growth factor 2-associated protein (Homo sapiens (Human)).